The primary structure comprises 157 residues: Ribosome-binding factor A (157 aa).

Positions 127-157 (QQQFGSEDASVEDEVLGDDVADDADETEGKD) are disordered. Acidic residues predominate over residues 135–157 (ASVEDEVLGDDVADDADETEGKD).

Belongs to the RbfA family. In terms of assembly, monomer. Binds 30S ribosomal subunits, but not 50S ribosomal subunits or 70S ribosomes.

The protein resides in the cytoplasm. One of several proteins that assist in the late maturation steps of the functional core of the 30S ribosomal subunit. Associates with free 30S ribosomal subunits (but not with 30S subunits that are part of 70S ribosomes or polysomes). Required for efficient processing of 16S rRNA. May interact with the 5'-terminal helix region of 16S rRNA. This chain is Ribosome-binding factor A, found in Shewanella baltica (strain OS155 / ATCC BAA-1091).